The following is a 240-amino-acid chain: Large ribosomal subunit protein bL25 (240 aa).

The interval 1-23 (MATVKELKATARPKAGKGAARAE) is disordered. A compositionally biased stretch (low complexity) spans 10–19 (TARPKAGKGA).

The protein belongs to the bacterial ribosomal protein bL25 family. CTC subfamily. As to quaternary structure, part of the 50S ribosomal subunit; part of the 5S rRNA/L5/L18/L25 subcomplex. Contacts the 5S rRNA. Binds to the 5S rRNA independently of L5 and L18.

Its function is as follows. This is one of the proteins that binds to the 5S RNA in the ribosome where it forms part of the central protuberance. This is Large ribosomal subunit protein bL25 from Afipia carboxidovorans (strain ATCC 49405 / DSM 1227 / KCTC 32145 / OM5) (Oligotropha carboxidovorans).